We begin with the raw amino-acid sequence, 335 residues long: Phospho-N-acetylmuramoyl-pentapeptide-transferase (335 aa).

A run of 10 helical transmembrane segments spans residues 5–25, 50–70, 78–98, 114–133, 145–165, 177–197, 200–220, 236–256, 262–282, and 311–331; these read IFLAAALALMITLILGPLMIP, TPTMGGIIFLVGIVVSALIMA, MVMVISAMLGYGLIGFIDDFI, LIGQIALALLLTWGANRYLG, IHLELGLFYYPFVSFIIVGIT, LAAGTTLFSMLSYVSIATLAA, GGGVAILAYESDLAVFAAAAV, VFMGDTGSLALGGALVGLAVL, ILLIIGGVYVVEAISVILQVF, and VVMVFWLASLLCGVLGVIAYM.

It belongs to the glycosyltransferase 4 family. MraY subfamily. The cofactor is Mg(2+).

The protein resides in the cell membrane. It catalyses the reaction UDP-N-acetyl-alpha-D-muramoyl-L-alanyl-gamma-D-glutamyl-meso-2,6-diaminopimeloyl-D-alanyl-D-alanine + di-trans,octa-cis-undecaprenyl phosphate = di-trans,octa-cis-undecaprenyl diphospho-N-acetyl-alpha-D-muramoyl-L-alanyl-D-glutamyl-meso-2,6-diaminopimeloyl-D-alanyl-D-alanine + UMP. It participates in cell wall biogenesis; peptidoglycan biosynthesis. Functionally, catalyzes the initial step of the lipid cycle reactions in the biosynthesis of the cell wall peptidoglycan: transfers peptidoglycan precursor phospho-MurNAc-pentapeptide from UDP-MurNAc-pentapeptide onto the lipid carrier undecaprenyl phosphate, yielding undecaprenyl-pyrophosphoryl-MurNAc-pentapeptide, known as lipid I. The polypeptide is Phospho-N-acetylmuramoyl-pentapeptide-transferase (Desulfitobacterium hafniense (strain DSM 10664 / DCB-2)).